A 317-amino-acid polypeptide reads, in one-letter code: MGLAGPKKRTKISHDPNNIAWSRSTTGYGHRIMSAQGWTPGAFLGAPGAAHSSCYTAASASHIRVVLKDDTLGLGARPRNPLAEDEPTGLDAFQDLLGRLNGKSEVELVKEQRRREDIKLLSFVERRWKSMAFVPGGYLVKEDPARTLVVAEQANKDDSSDPKSRQETTQKRPKKEKRKEKSRHREEPIDSRSISSKPERGTINSANQTSDDESTNIVPSESKSRKKEKKKKSKKRKMDEVNEEESVPDGRIGCKGILPNKQSAQQSTGERYISGDSMINAREHRPLGRQVIRSRYIQQKKMALLDAKSLNEIFMTS.

The region spanning 25-79 (TTGYGHRIMSAQGWTPGAFLGAPGAAHSSCYTAASASHIRVVLKDDTLGLGARPR) is the G-patch domain. Positions 152–268 (EQANKDDSSD…PNKQSAQQST (117 aa)) are disordered. Positions 154–170 (ANKDDSSDPKSRQETTQ) are enriched in basic and acidic residues. Basic residues predominate over residues 171–182 (KRPKKEKRKEKS). Residues 192-219 (RSISSKPERGTINSANQTSDDESTNIVP) show a composition bias toward polar residues. Residues 224–236 (SRKKEKKKKSKKR) are compositionally biased toward basic residues.

Belongs to the PINX1 family.

The protein localises to the nucleus. It is found in the nucleolus. Its function is as follows. Involved in rRNA-processing at A0, A1 and A2 sites and negatively regulates telomerase. In Coccidioides immitis (strain RS) (Valley fever fungus), this protein is Protein PXR1 (PXR1).